A 100-amino-acid polypeptide reads, in one-letter code: NADH-quinone oxidoreductase subunit K (100 aa).

Transmembrane regions (helical) follow at residues 2–22 (ITLT…LVGI), 29–49 (LMLF…LAAF), and 63–83 (FFII…LIIW).

The protein belongs to the complex I subunit 4L family. As to quaternary structure, NDH-1 is composed of 14 different subunits. Subunits NuoA, H, J, K, L, M, N constitute the membrane sector of the complex.

The protein resides in the cell inner membrane. The catalysed reaction is a quinone + NADH + 5 H(+)(in) = a quinol + NAD(+) + 4 H(+)(out). NDH-1 shuttles electrons from NADH, via FMN and iron-sulfur (Fe-S) centers, to quinones in the respiratory chain. The immediate electron acceptor for the enzyme in this species is believed to be ubiquinone. Couples the redox reaction to proton translocation (for every two electrons transferred, four hydrogen ions are translocated across the cytoplasmic membrane), and thus conserves the redox energy in a proton gradient. The chain is NADH-quinone oxidoreductase subunit K from Nitratiruptor sp. (strain SB155-2).